A 252-amino-acid chain; its full sequence is 5-oxoprolinase subunit A (252 aa).

Belongs to the LamB/PxpA family. In terms of assembly, forms a complex composed of PxpA, PxpB and PxpC.

It carries out the reaction 5-oxo-L-proline + ATP + 2 H2O = L-glutamate + ADP + phosphate + H(+). Catalyzes the cleavage of 5-oxoproline to form L-glutamate coupled to the hydrolysis of ATP to ADP and inorganic phosphate. The protein is 5-oxoprolinase subunit A of Kocuria rhizophila (strain ATCC 9341 / DSM 348 / NBRC 103217 / DC2201).